The chain runs to 347 residues: NADH-ubiquinone oxidoreductase chain 2 (347 aa).

10 helical membrane-spanning segments follow: residues 13 to 33 (IILG…WIGF), 59 to 79 (YFLT…TNLL), 96 to 116 (AVMT…FWVP), 122 to 142 (IPLS…LSVL), 149 to 169 (VSPT…GWGG), 178 to 198 (ILAY…AYNP), 201 to 221 (TLLN…LFMF), 247 to 267 (IMLS…WMII), 274 to 294 (ESLL…YFYM), and 323 to 343 (VPLL…APAL).

This sequence belongs to the complex I subunit 2 family. Core subunit of respiratory chain NADH dehydrogenase (Complex I) which is composed of 45 different subunits. Interacts with TMEM242.

The protein resides in the mitochondrion inner membrane. It carries out the reaction a ubiquinone + NADH + 5 H(+)(in) = a ubiquinol + NAD(+) + 4 H(+)(out). Core subunit of the mitochondrial membrane respiratory chain NADH dehydrogenase (Complex I) which catalyzes electron transfer from NADH through the respiratory chain, using ubiquinone as an electron acceptor. Essential for the catalytic activity and assembly of complex I. The polypeptide is NADH-ubiquinone oxidoreductase chain 2 (Megaderma spasma (Lesser false vampire bat)).